The following is a 109-amino-acid chain: uncharacterized protein (109 aa).

It to A.fulgidus AF1885.

This is an uncharacterized protein from Methanocaldococcus jannaschii (strain ATCC 43067 / DSM 2661 / JAL-1 / JCM 10045 / NBRC 100440) (Methanococcus jannaschii).